The following is a 343-amino-acid chain: N(4)-bis(aminopropyl)spermidine synthase (343 aa).

Belongs to the branched-chain polyamine synthase family.

It is found in the cytoplasm. The enzyme catalyses 2 S-adenosyl 3-(methylsulfanyl)propylamine + spermidine = N(4)-bis(aminopropyl)spermidine + 2 S-methyl-5'-thioadenosine + 2 H(+). The protein operates within amine and polyamine biosynthesis. Its function is as follows. Involved in the biosynthesis of branched-chain polyamines, which support the growth of thermophiles under high-temperature conditions. Catalyzes the sequential condensation of spermidine with the aminopropyl groups of decarboxylated S-adenosylmethionines to produce N(4)-bis(aminopropyl)spermidine via N(4)-aminopropylspermidine. This chain is N(4)-bis(aminopropyl)spermidine synthase, found in Thermus thermophilus.